Here is a 365-residue protein sequence, read N- to C-terminus: Chorismate synthase (365 aa).

R48 and R54 together coordinate NADP(+). FMN contacts are provided by residues 125–127 (RSS), 237–238 (NA), G277, 292–296 (KPTSS), and R318.

It belongs to the chorismate synthase family. In terms of assembly, homotetramer. The cofactor is FMNH2.

The enzyme catalyses 5-O-(1-carboxyvinyl)-3-phosphoshikimate = chorismate + phosphate. Its pathway is metabolic intermediate biosynthesis; chorismate biosynthesis; chorismate from D-erythrose 4-phosphate and phosphoenolpyruvate: step 7/7. Catalyzes the anti-1,4-elimination of the C-3 phosphate and the C-6 proR hydrogen from 5-enolpyruvylshikimate-3-phosphate (EPSP) to yield chorismate, which is the branch point compound that serves as the starting substrate for the three terminal pathways of aromatic amino acid biosynthesis. This reaction introduces a second double bond into the aromatic ring system. This Verminephrobacter eiseniae (strain EF01-2) protein is Chorismate synthase.